The chain runs to 532 residues: Exopolysaccharide phosphotransferase CpsY (532 aa).

Belongs to the stealth family.

The protein is Exopolysaccharide phosphotransferase CpsY (cpsY) of Mycobacterium bovis (strain ATCC BAA-935 / AF2122/97).